The sequence spans 507 residues: UDP-N-acetylhexosamine pyrophosphorylase-like protein 1 (507 aa).

A disordered region spans residues A56 to R91. Over residues R78–R91 the composition is skewed to basic and acidic residues. A Substrate binding motif is present at residues L111–G114. UTP-binding positions include L111 to G114, K125, Q199, and G225. N226 lines the substrate pocket. Residue D256 coordinates UTP. Positions E306 to Y307 match the Substrate binding motif. K380 serves as a coordination point for UTP. Residue K410 coordinates substrate.

The protein belongs to the UDPGP type 1 family.

The polypeptide is UDP-N-acetylhexosamine pyrophosphorylase-like protein 1 (UAP1L1) (Homo sapiens (Human)).